The following is a 465-amino-acid chain: Asparagine--tRNA ligase (465 aa).

Belongs to the class-II aminoacyl-tRNA synthetase family. Homodimer.

The protein resides in the cytoplasm. It catalyses the reaction tRNA(Asn) + L-asparagine + ATP = L-asparaginyl-tRNA(Asn) + AMP + diphosphate + H(+). The chain is Asparagine--tRNA ligase from Pseudoalteromonas atlantica (strain T6c / ATCC BAA-1087).